Here is a 236-residue protein sequence, read N- to C-terminus: Small ribosomal subunit protein eS6 (236 aa).

Belongs to the eukaryotic ribosomal protein eS6 family. As to quaternary structure, component of the small ribosomal subunit. Mature ribosomes consist of a small (40S) and a large (60S) subunit. The 40S subunit contains about 32 different proteins and 1 molecule of RNA (18S). The 60S subunit contains 45 different proteins and 3 molecules of RNA (25S, 5.8S and 5S).

The protein localises to the cytoplasm. In terms of biological role, component of the ribosome, a large ribonucleoprotein complex responsible for the synthesis of proteins in the cell. The small ribosomal subunit (SSU) binds messenger RNAs (mRNAs) and translates the encoded message by selecting cognate aminoacyl-transfer RNA (tRNA) molecules. The large subunit (LSU) contains the ribosomal catalytic site termed the peptidyl transferase center (PTC), which catalyzes the formation of peptide bonds, thereby polymerizing the amino acids delivered by tRNAs into a polypeptide chain. The nascent polypeptides leave the ribosome through a tunnel in the LSU and interact with protein factors that function in enzymatic processing, targeting, and the membrane insertion of nascent chains at the exit of the ribosomal tunnel. RPS6A is involved in nucleolar processing of pre-18S ribosomal RNA and ribosome assembly. This is Small ribosomal subunit protein eS6 (RPS6A) from Candida albicans (strain SC5314 / ATCC MYA-2876) (Yeast).